The sequence spans 235 residues: Aspartate/glutamate leucyltransferase (235 aa).

The protein belongs to the R-transferase family. Bpt subfamily.

The protein resides in the cytoplasm. The catalysed reaction is N-terminal L-glutamyl-[protein] + L-leucyl-tRNA(Leu) = N-terminal L-leucyl-L-glutamyl-[protein] + tRNA(Leu) + H(+). It carries out the reaction N-terminal L-aspartyl-[protein] + L-leucyl-tRNA(Leu) = N-terminal L-leucyl-L-aspartyl-[protein] + tRNA(Leu) + H(+). Its function is as follows. Functions in the N-end rule pathway of protein degradation where it conjugates Leu from its aminoacyl-tRNA to the N-termini of proteins containing an N-terminal aspartate or glutamate. This is Aspartate/glutamate leucyltransferase from Pseudomonas savastanoi pv. phaseolicola (strain 1448A / Race 6) (Pseudomonas syringae pv. phaseolicola (strain 1448A / Race 6)).